The sequence spans 441 residues: Serine hydroxymethyltransferase (441 aa).

Residues leucine 119 and 123–125 (GHL) contribute to the (6S)-5,6,7,8-tetrahydrofolate site. The residue at position 228 (lysine 228) is an N6-(pyridoxal phosphate)lysine. 370–372 (SPF) serves as a coordination point for (6S)-5,6,7,8-tetrahydrofolate.

Belongs to the SHMT family. Homodimer. The cofactor is pyridoxal 5'-phosphate.

The protein resides in the cytoplasm. The catalysed reaction is (6R)-5,10-methylene-5,6,7,8-tetrahydrofolate + glycine + H2O = (6S)-5,6,7,8-tetrahydrofolate + L-serine. It functions in the pathway one-carbon metabolism; tetrahydrofolate interconversion. The protein operates within amino-acid biosynthesis; glycine biosynthesis; glycine from L-serine: step 1/1. In terms of biological role, catalyzes the reversible interconversion of serine and glycine with tetrahydrofolate (THF) serving as the one-carbon carrier. This reaction serves as the major source of one-carbon groups required for the biosynthesis of purines, thymidylate, methionine, and other important biomolecules. Also exhibits THF-independent aldolase activity toward beta-hydroxyamino acids, producing glycine and aldehydes, via a retro-aldol mechanism. This Chlorobium phaeovibrioides (strain DSM 265 / 1930) (Prosthecochloris vibrioformis (strain DSM 265)) protein is Serine hydroxymethyltransferase.